The primary structure comprises 250 residues: ATP synthase subunit a (250 aa).

Helical transmembrane passes span 26–46, 84–104, 114–134, 143–163, 193–213, and 216–236; these read FTNA…FLYL, FFPM…LGMF, IIVT…YGFY, LFVP…IEVI, FVAS…LPLI, and VALT…FAVL.

It belongs to the ATPase A chain family. As to quaternary structure, F-type ATPases have 2 components, CF(1) - the catalytic core - and CF(0) - the membrane proton channel. CF(1) has five subunits: alpha(3), beta(3), gamma(1), delta(1), epsilon(1). CF(0) has three main subunits: a(1), b(2) and c(9-12). The alpha and beta chains form an alternating ring which encloses part of the gamma chain. CF(1) is attached to CF(0) by a central stalk formed by the gamma and epsilon chains, while a peripheral stalk is formed by the delta and b chains.

The protein resides in the cell inner membrane. Key component of the proton channel; it plays a direct role in the translocation of protons across the membrane. This Sinorhizobium fredii (strain NBRC 101917 / NGR234) protein is ATP synthase subunit a.